Here is a 513-residue protein sequence, read N- to C-terminus: Nitrogenase molybdenum-iron protein beta chain (513 aa).

[8Fe-7S] cluster contacts are provided by C70, C95, and C153.

The protein belongs to the NifD/NifK/NifE/NifN family. As to quaternary structure, tetramer of two alpha and two beta chains. Forms complex with the iron protein (nitrogenase component 2). The cofactor is [8Fe-7S] cluster.

It carries out the reaction N2 + 8 reduced [2Fe-2S]-[ferredoxin] + 16 ATP + 16 H2O = H2 + 8 oxidized [2Fe-2S]-[ferredoxin] + 2 NH4(+) + 16 ADP + 16 phosphate + 6 H(+). Functionally, this molybdenum-iron protein is part of the nitrogenase complex that catalyzes the key enzymatic reactions in nitrogen fixation. This Sinorhizobium fredii (strain NBRC 101917 / NGR234) protein is Nitrogenase molybdenum-iron protein beta chain (nifK1).